Here is a 475-residue protein sequence, read N- to C-terminus: Subtilisin-like protease PopC (475 aa).

Disordered regions lie at residues 1-27 (MKSY…EQGE) and 57-106 (TLPG…QTGA). In terms of domain architecture, Peptidase S8 spans 165–475 (NRGMSSLAER…KTGKGLAVFR (311 aa)). Residues Asp201, His243, and Ser423 each act as charge relay system in the active site.

It belongs to the peptidase S8 family. As to quaternary structure, interacts with PopD in non-starving cells.

The protein resides in the cytoplasm. It localises to the periplasm. The protein localises to the secreted. Its activity is regulated as follows. In non-starving cells, secretion and protease activity are inhibited by formation of a cytoplasmic complex with PopD. In response to starvation, PopD is degraded in a RelA- and FtsH(D)-dependent manner, thereby releasing pre-formed PopC for secretion. Secreted and active during starvation, and rapidly degraded upon secretion. Secretion is significantly and reversibly reduced by carbonyl cyanide m-chlorophenyl hydrazine (CCCP), which dissipates or reduces the proton motive force (PMF), and by nigericin, which affects the pH gradient. In terms of biological role, required for fruiting body formation, a multicellular developmental program that is induced in response to starvation. Acts as a subtilisin-like protease that directly cleaves the CsgA precursor protein (p25) on the cell surface to generate the intercellular C-signal protein (p17) in starving cells. Preferentially acts in cis, i.e. PopC secreted by a cell only cleaves p25 on that cell. May also be important for processing of other protein(s) that are important for development. In Myxococcus xanthus (strain DK1622), this protein is Subtilisin-like protease PopC.